Reading from the N-terminus, the 212-residue chain is Interleukin-6 (212 aa).

Residues 1 to 29 (MNSFSTSAFGPVAFSLGLLLVLPAAFPAP) form the signal peptide. Cystine bridges form between Cys-72-Cys-78 and Cys-101-Cys-111. Residue Asn-73 is glycosylated (N-linked (GlcNAc...) asparagine). N-linked (GlcNAc...) asparagine glycosylation is present at Asn-172.

It belongs to the IL-6 superfamily. Component of a hexamer of two molecules each of IL6, IL6R and IL6ST; first binds to IL6R to associate with the signaling subunit IL6ST. Interacts with IL6R (via the N-terminal ectodomain); this interaction may be affected by IL6R-binding with SORL1, hence decreasing IL6 cis signaling. Interacts with SORL1 (via the N-terminal ectodomain); this interaction leads to IL6 internalization and lysosomal degradation. May form a trimeric complex with the soluble SORL1 ectodomain and soluble IL6R receptor; this interaction might stabilize circulating IL6, hence promoting IL6 trans signaling.

Its subcellular location is the secreted. Functionally, cytokine with a wide variety of biological functions in immunity, tissue regeneration, and metabolism. Binds to IL6R, then the complex associates to the signaling subunit IL6ST/gp130 to trigger the intracellular IL6-signaling pathway. The interaction with the membrane-bound IL6R and IL6ST stimulates 'classic signaling', whereas the binding of IL6 and soluble IL6R to IL6ST stimulates 'trans-signaling'. Alternatively, 'cluster signaling' occurs when membrane-bound IL6:IL6R complexes on transmitter cells activate IL6ST receptors on neighboring receiver cells. Its function is as follows. IL6 is a potent inducer of the acute phase response. Rapid production of IL6 contributes to host defense during infection and tissue injury, but excessive IL6 synthesis is involved in disease pathology. In the innate immune response, is synthesized by myeloid cells, such as macrophages and dendritic cells, upon recognition of pathogens through toll-like receptors (TLRs) at the site of infection or tissue injury. In the adaptive immune response, is required for the differentiation of B cells into immunoglobulin-secreting cells. Plays a major role in the differentiation of CD4(+) T cell subsets. Essential factor for the development of T follicular helper (Tfh) cells that are required for the induction of germinal-center formation. Required to drive naive CD4(+) T cells to the Th17 lineage. Also required for proliferation of myeloma cells and the survival of plasmablast cells. Acts as an essential factor in bone homeostasis and on vessels directly or indirectly by induction of VEGF, resulting in increased angiogenesis activity and vascular permeability. Induces, through 'trans-signaling' and synergistically with IL1B and TNF, the production of VEGF. Involved in metabolic controls, is discharged into the bloodstream after muscle contraction increasing lipolysis and improving insulin resistance. 'Trans-signaling' in central nervous system also regulates energy and glucose homeostasis. Mediates, through GLP-1, crosstalk between insulin-sensitive tissues, intestinal L cells and pancreatic islets to adapt to changes in insulin demand. Also acts as a myokine. Plays a protective role during liver injury, being required for maintenance of tissue regeneration. Also has a pivotal role in iron metabolism by regulating HAMP/hepcidin expression upon inflammation or bacterial infection. Through activation of IL6ST-YAP-NOTCH pathway, induces inflammation-induced epithelial regeneration. The sequence is that of Interleukin-6 (IL6) from Cercocebus atys (Sooty mangabey).